The chain runs to 309 residues: Probable ABC transporter permease protein y4oQ (309 aa).

7 helical membrane passes run 25–45, 89–109, 123–143, 174–194, 221–241, 246–266, and 278–298; these read VVWF…VPLV, LIYA…FAVL, LMLI…KLLY, VIIV…LAGL, LPHL…GVMA, IFLL…VYAY, and TTAI…PLIW. In terms of domain architecture, ABC transmembrane type-1 spans 85-296; the sequence is IRVTLIYAVV…VFVLAISAPL (212 aa).

It belongs to the binding-protein-dependent transport system permease family. MalFG subfamily.

It localises to the cell inner membrane. Probably part of the binding-protein-dependent transport system y4oPQRS. This system probably transports a sugar-like molecule. Probably responsible for the translocation of the substrate across the membrane. The chain is Probable ABC transporter permease protein y4oQ from Sinorhizobium fredii (strain NBRC 101917 / NGR234).